Reading from the N-terminus, the 354-residue chain is Guanine nucleotide-binding protein G(o) subunit alpha (354 aa).

Gly-2 carries the N-myristoyl glycine lipid modification. Cys-3 carries the S-palmitoyl cysteine lipid modification. Residues 32–354 (KDIKLLLLGA…ANNLRGCGLY (323 aa)) enclose the G-alpha domain. The interval 35–48 (KLLLLGAGESGKST) is G1 motif. Residues 40-47 (GAGESGKS), 176-182 (LRTRVKT), 201-205 (DVGGQ), 270-273 (NKKD), and Ala-326 each bind GTP. Residues Ser-47 and Thr-182 each coordinate Mg(2+). A G2 motif region spans residues 174–182 (DILRTRVKT). The interval 197 to 206 (FKLFDVGGQR) is G3 motif. A G4 motif region spans residues 266-273 (ILFLNKKD). The G5 motif stretch occupies residues 324 to 329 (TCATDT).

It belongs to the G-alpha family. G(i/o/t/z) subfamily. As to quaternary structure, g proteins are composed of 3 units; alpha, beta and gamma. The alpha chain contains the guanine nucleotide binding site.

Its function is as follows. Guanine nucleotide-binding proteins (G proteins) are involved as modulators or transducers in various transmembrane signaling systems. The G(o) protein function is not clear. The protein is Guanine nucleotide-binding protein G(o) subunit alpha of Planorbella trivolvis (Marsh rams-horn).